The primary structure comprises 819 residues: Protein O-mannosyl-transferase tmem260 (819 aa).

Residues 1–10 (MNNSPTLSNT) show a composition bias toward polar residues. The disordered stretch occupies residues 1–68 (MNNSPTLSNT…NNNNNIINVN (68 aa)). The segment covering 15-68 (NNNNNSNSNSNSNNNNNNNNNNNNNSNNNNNNNNNVNRNVNNRNNNNNNIINVN) has biased composition (low complexity). 3 N-linked (GlcNAc...) asparagine glycosylation sites follow: N18, N38, and N70. 7 helical membrane-spanning segments follow: residues 113 to 133 (IACI…TQYP), 152 to 172 (VAHP…SHII), 185 to 205 (FMSS…VYLW), 210 to 230 (WCGL…MYQI), 232 to 252 (GEVF…GVWY), 285 to 305 (LTNQ…LMFI), and 316 to 336 (ILSN…LLFI). A glycan (N-linked (GlcNAc...) asparagine) is linked at N349. The next 4 membrane-spanning stretches (helical) occupy residues 391–411 (LIIQ…LNLL), 427–447 (MIIF…NLPI), 459–479 (FFMQ…KSIF), and 505–525 (YLLP…NYNL). N-linked (GlcNAc...) asparagine glycosylation is found at N531, N686, N693, and N783.

It belongs to the glycosyltransferase 117 (GT117) family.

The protein localises to the endoplasmic reticulum membrane. It carries out the reaction a di-trans,poly-cis-dolichyl beta-D-mannosyl phosphate + L-seryl-[protein] = 3-O-(alpha-D-mannosyl)-L-seryl-[protein] + a di-trans,poly-cis-dolichyl phosphate + H(+). It catalyses the reaction a di-trans,poly-cis-dolichyl beta-D-mannosyl phosphate + L-threonyl-[protein] = 3-O-(alpha-D-mannosyl)-L-threonyl-[protein] + a di-trans,poly-cis-dolichyl phosphate + H(+). Its function is as follows. O-mannosyl-transferase that transfers mannosyl residues to the hydroxyl group of serine or threonine residues of proteins. This chain is Protein O-mannosyl-transferase tmem260, found in Dictyostelium discoideum (Social amoeba).